Reading from the N-terminus, the 357-residue chain is Histidine biosynthesis bifunctional protein HisB (357 aa).

The tract at residues 1-168 (MTPILFIDRD…GIAHALADAP (168 aa)) is histidinol-phosphatase. The active-site Nucleophile is the D8. Mg(2+) is bound by residues D8, D10, and D128. Catalysis depends on D10, which acts as the Proton donor. The tract at residues 169 to 357 (RIAVVQRDTK…TALPTTKGAL (189 aa)) is imidazoleglycerol-phosphate dehydratase.

The protein in the N-terminal section; belongs to the histidinol-phosphatase family. In the C-terminal section; belongs to the imidazoleglycerol-phosphate dehydratase family. It depends on Mg(2+) as a cofactor.

Its subcellular location is the cytoplasm. The catalysed reaction is D-erythro-1-(imidazol-4-yl)glycerol 3-phosphate = 3-(imidazol-4-yl)-2-oxopropyl phosphate + H2O. It catalyses the reaction L-histidinol phosphate + H2O = L-histidinol + phosphate. The protein operates within amino-acid biosynthesis; L-histidine biosynthesis; L-histidine from 5-phospho-alpha-D-ribose 1-diphosphate: step 6/9. It functions in the pathway amino-acid biosynthesis; L-histidine biosynthesis; L-histidine from 5-phospho-alpha-D-ribose 1-diphosphate: step 8/9. The chain is Histidine biosynthesis bifunctional protein HisB from Stenotrophomonas maltophilia (strain R551-3).